We begin with the raw amino-acid sequence, 556 residues long: Formate--tetrahydrofolate ligase 1 (556 aa).

Position 65–72 (65–72) interacts with ATP; sequence TPAGEGKS.

It belongs to the formate--tetrahydrofolate ligase family.

It carries out the reaction (6S)-5,6,7,8-tetrahydrofolate + formate + ATP = (6R)-10-formyltetrahydrofolate + ADP + phosphate. The protein operates within one-carbon metabolism; tetrahydrofolate interconversion. The polypeptide is Formate--tetrahydrofolate ligase 1 (Streptococcus pyogenes serotype M4 (strain MGAS10750)).